Reading from the N-terminus, the 282-residue chain is Adenosylcobinamide-GDP ribazoletransferase (282 aa).

Helical transmembrane passes span 47 to 67 (GVGI…QALL), 72 to 92 (FTPL…TGGF), 124 to 144 (AFGA…LAML), 167 to 187 (AALL…IWLL), 208 to 228 (GSLL…GLAL), and 231 to 251 (ISLI…GALF).

This sequence belongs to the CobS family. Mg(2+) serves as cofactor.

It is found in the cell inner membrane. It carries out the reaction alpha-ribazole + adenosylcob(III)inamide-GDP = adenosylcob(III)alamin + GMP + H(+). The catalysed reaction is alpha-ribazole 5'-phosphate + adenosylcob(III)inamide-GDP = adenosylcob(III)alamin 5'-phosphate + GMP + H(+). It functions in the pathway cofactor biosynthesis; adenosylcobalamin biosynthesis; adenosylcobalamin from cob(II)yrinate a,c-diamide: step 7/7. Its function is as follows. Joins adenosylcobinamide-GDP and alpha-ribazole to generate adenosylcobalamin (Ado-cobalamin). Also synthesizes adenosylcobalamin 5'-phosphate from adenosylcobinamide-GDP and alpha-ribazole 5'-phosphate. This is Adenosylcobinamide-GDP ribazoletransferase from Polaromonas sp. (strain JS666 / ATCC BAA-500).